We begin with the raw amino-acid sequence, 33 residues long: Photosystem II reaction center protein Psb30 (33 aa).

A helical transmembrane segment spans residues 5 to 25; the sequence is VVAQLTVLALIVVSGPLVIGL.

This sequence belongs to the Psb30/Ycf12 family. PSII is composed of 1 copy each of membrane proteins PsbA, PsbB, PsbC, PsbD, PsbE, PsbF, PsbH, PsbI, PsbJ, PsbK, PsbL, PsbM, PsbT, PsbX, PsbY, PsbZ, Psb30/Ycf12, peripheral proteins of the oxygen-evolving complex and a large number of cofactors. It forms dimeric complexes.

Its subcellular location is the plastid. It is found in the chloroplast thylakoid membrane. In terms of biological role, a core subunit of photosystem II (PSII), probably helps stabilize the reaction center. The sequence is that of Photosystem II reaction center protein Psb30 from Zygnema circumcarinatum (Green alga).